The sequence spans 245 residues: PF03932 family protein CutC (245 aa).

The protein belongs to the CutC family.

The protein resides in the cytoplasm. In Rhizobium meliloti (strain 1021) (Ensifer meliloti), this protein is PF03932 family protein CutC.